Reading from the N-terminus, the 216-residue chain is Adenylate kinase (216 aa).

Residue 11 to 16 (GSGKGT) participates in ATP binding. The interval 31–60 (ATGDLFRKAIERGDELGDTVKSYMERGELV) is NMP. AMP contacts are provided by residues Thr-32, Arg-37, 58–60 (ELV), 86–89 (GFPR), and Gln-93. Positions 127–163 (GRWVCRSCQSPYQCGCAEVAEGKCSRCQGELYQRPDD) are LID. Arg-128 lines the ATP pocket. The Zn(2+) site is built by Cys-131, Cys-134, Cys-150, and Cys-153. Positions 160 and 171 each coordinate AMP. Ala-199 provides a ligand contact to ATP.

It belongs to the adenylate kinase family. As to quaternary structure, monomer.

It localises to the cytoplasm. It catalyses the reaction AMP + ATP = 2 ADP. Its pathway is purine metabolism; AMP biosynthesis via salvage pathway; AMP from ADP: step 1/1. Its function is as follows. Catalyzes the reversible transfer of the terminal phosphate group between ATP and AMP. Plays an important role in cellular energy homeostasis and in adenine nucleotide metabolism. In Dehalococcoides mccartyi (strain ATCC BAA-2266 / KCTC 15142 / 195) (Dehalococcoides ethenogenes (strain 195)), this protein is Adenylate kinase.